Consider the following 436-residue polypeptide: MTVYHFVGIKGTGMSSLAQILHDMKHTVQGSDYEKRFFTQTALEKRNISILPFDKSNVKEGQVIIAGNAFPDTHEEIVAAKELNIPVHRYHHFLGDLMNQYTSVAVTGAHGKTSTTGLLAHVMQGAHPTSYLIGDGTGHGVENSKYFVFEACEYRRHFLSYNPDYAIMTNIDFDHPDYFTDINDVFSAFQEMALQVKKGIIACGDDEELQKIQAKVPVIFYGFGEDNDFQARNIQKRTDGTIFDVFVRNTYYDTFKITGYGNHSVLNALAVIALCHYENVDVEAVKHQLTTFEGVKRRFNEKPMGEQVIIDDYAHHPTEINATIEAARQKHPEREIVAVFQPHTFSRTEKFLDEFAESLSKADQVYLCDIFGSARENKGELTIEDLQKRIDGAELITDTTTDVLKKHKNGVLIFMGAGDIQKFEAAYVKEVQVAEK.

108–114 (GAHGKTS) provides a ligand contact to ATP.

The protein belongs to the MurCDEF family.

The protein resides in the cytoplasm. It catalyses the reaction UDP-N-acetyl-alpha-D-muramate + L-alanine + ATP = UDP-N-acetyl-alpha-D-muramoyl-L-alanine + ADP + phosphate + H(+). It functions in the pathway cell wall biogenesis; peptidoglycan biosynthesis. Its function is as follows. Cell wall formation. The polypeptide is UDP-N-acetylmuramate--L-alanine ligase (Bacillus cereus (strain ZK / E33L)).